We begin with the raw amino-acid sequence, 137 residues long: DNA-binding protein H-NS (137 aa).

Residues 112–117 mediate DNA binding; the sequence is QGRTPA.

This sequence belongs to the histone-like protein H-NS family. As to quaternary structure, homodimer that oligomerizes on DNA into higher-order complexes that form bridges between disparate regions of DNA compacting it. Interacts with Hha, Cnu and StpA.

The protein resides in the cytoplasm. It is found in the nucleoid. A DNA-binding protein implicated in transcriptional repression and chromosome organization and compaction. Binds nucleation sites in AT-rich DNA and bridges them, forming higher-order nucleoprotein complexes and condensing the chromosome. As many horizontally transferred genes are AT-rich, it plays a central role in silencing foreign genes. A subset of genes are repressed by H-NS in association with other proteins. The polypeptide is DNA-binding protein H-NS (hns) (Escherichia coli O6:H1 (strain CFT073 / ATCC 700928 / UPEC)).